The primary structure comprises 767 residues: ATPase family gene 2 protein homolog B (767 aa).

At M1 the chain carries N-acetylmethionine. ATP is bound by residues 241–248 (GPPGVGKT) and 507–514 (GPPGCAKT).

It belongs to the AAA ATPase family. AFG2 subfamily. In terms of assembly, part of the 55LCC heterohexameric ATPase complex composed at least of AIRIM, AFG2A, AFG2B and CINP. Associates with pre-60S ribosomal particles.

It is found in the cytoplasm. The protein localises to the cytoskeleton. It localises to the spindle. The protein resides in the nucleus. The enzyme catalyses ATP + H2O = ADP + phosphate + H(+). Its activity is regulated as follows. In the context of 55LCC heterohexameric ATPase complex, the ATPase activity is stimulated by DNA binding and inhibited in presence of RNA. ATP-dependent chaperone part of the 55LCC heterohexameric ATPase complex which is chromatin-associated and promotes replisome proteostasis to maintain replication fork progression and genome stability. Required for replication fork progression, sister chromatid cohesion, and chromosome stability. The ATPase activity is specifically enhanced by replication fork DNA and is coupled to cysteine protease-dependent cleavage of replisome substrates in response to replication fork damage. Uses ATPase activity to process replisome substrates in S-phase, facilitating their proteolytic turnover from chromatin to ensure DNA replication and mitotic fidelity. Plays an essential role in the cytoplasmic maturation steps of pre-60S ribosomal particles by promoting the release of shuttling protein RSL24D1/RLP24 from the pre-ribosomal particles. In Bos taurus (Bovine), this protein is ATPase family gene 2 protein homolog B (AFG2B).